Reading from the N-terminus, the 443-residue chain is Squalene synthase (443 aa).

The next 2 helical transmembrane spans lie at T291–F311 and I423–I443.

It belongs to the phytoene/squalene synthase family. The cofactor is Mg(2+).

The protein resides in the endoplasmic reticulum membrane. The catalysed reaction is 2 (2E,6E)-farnesyl diphosphate + NADPH + H(+) = squalene + 2 diphosphate + NADP(+). It carries out the reaction 2 (2E,6E)-farnesyl diphosphate + NADH + H(+) = squalene + 2 diphosphate + NAD(+). The protein operates within terpene metabolism; lanosterol biosynthesis; lanosterol from farnesyl diphosphate: step 1/3. Catalyzes the condensation of 2 two farnesyl pyrophosphate moieties to form squalene. It is the first committed enzyme of the sterol biosynthesis pathway. Required for the biosynthesis of ergosterol. This chain is Squalene synthase (ERG9), found in Cyberlindnera jadinii (Torula yeast).